Reading from the N-terminus, the 106-residue chain is Large ribosomal subunit protein bL21c (106 aa).

The protein belongs to the bacterial ribosomal protein bL21 family. As to quaternary structure, part of the 50S ribosomal subunit.

The protein resides in the plastid. The protein localises to the chloroplast. This protein binds to 23S rRNA. This chain is Large ribosomal subunit protein bL21c, found in Gracilaria tenuistipitata var. liui (Red alga).